Consider the following 365-residue polypeptide: 3-galactosyl-N-acetylglucosaminide 4-alpha-L-fucosyltransferase FUT3 (365 aa).

The Cytoplasmic portion of the chain corresponds to 1–15 (MYPPGCAKVKCSWHH). The helical; Signal-anchor for type II membrane protein transmembrane segment at 16-34 (CLPGLLLQLLLALCFFSYL) threads the bilayer. Residues 35–365 (RMSQEKPKPK…TVPSIASWFQ (331 aa)) lie on the Lumenal side of the membrane. Residues Asn-100, Asn-158, and Asn-189 are each glycosylated (N-linked (GlcNAc...) asparagine).

It belongs to the glycosyltransferase 10 family. In terms of processing, glycosylated. As to expression, liver, kidney, lung and brain.

Its subcellular location is the golgi apparatus. It localises to the golgi stack membrane. The catalysed reaction is a beta-D-galactosyl-(1-&gt;3)-N-acetyl-beta-D-glucosaminyl derivative + GDP-beta-L-fucose = a beta-D-galactosyl-(1-&gt;3)-[alpha-L-fucosyl-(1-&gt;4)]-N-acetyl-beta-D-glucosaminyl derivative + GDP + H(+). It carries out the reaction an N-acetyl-alpha-neuraminyl-(2-&gt;3)-beta-D-galactosyl-(1-&gt;4)-N-acetyl-beta-D-glucosaminyl derivative + GDP-beta-L-fucose = an alpha-Neu5Ac-(2-&gt;3)-beta-D-Gal-(1-&gt;4)-[alpha-L-Fuc-(1-&gt;3)]-beta-D-GlcNAc derivative + GDP + H(+). The enzyme catalyses a beta-D-galactosyl-(1-&gt;4)-N-acetyl-beta-D-glucosaminyl derivative + GDP-beta-L-fucose = a beta-D-galactosyl-(1-&gt;4)-[alpha-L-fucosyl-(1-&gt;3)]-N-acetyl-beta-D-glucosaminyl derivative + GDP + H(+). It catalyses the reaction an alpha-Neu5Ac-(2-&gt;3)-beta-D-Gal-(1-&gt;4)-beta-D-GlcNAc-(1-&gt;3)-beta-D-Gal-(1-&gt;4)-[alpha-L-Fuc-(1-&gt;3)]-beta-D-GlcNAc derivative + GDP-beta-L-fucose = an alpha-Neu5Ac-(2-&gt;3)-beta-D-Gal-(1-&gt;4)-[alpha-L-Fuc-(1-&gt;3)]-beta-D-GlcNAc-(1-&gt;3)-beta-D-Gal-(1-&gt;4)-[alpha-L-Fuc-(1-&gt;3)]-beta-D-GlcNAc derivative + GDP + H(+). The catalysed reaction is Lc4Cer + GDP-beta-L-fucose = a lactoside III(4)-a-Fuc-Lc4Cer + GDP + H(+). It carries out the reaction a beta-D-Gal-(1-&gt;3)-beta-D-GlcNAc-(1-&gt;3)-beta-D-Gal-(1-&gt;4)-beta-D-Glc-(1&lt;-&gt;1')-Cer(d18:1(4E)) + GDP-beta-L-fucose = a III(4)-a-Fuc-Lc4Cer(d18:1(4E)) + GDP + H(+). The enzyme catalyses N-acetyl-alpha-neuraminosyl-(2-&gt;3)-beta-D-galactosyl-(1-&gt;3)-[N-acetyl-alpha-neuraminosyl-(2-&gt;6)]-N-acetyl-beta-D-glucosaminyl-(1-&gt;3)-beta-D-galactosyl-(1-&gt;4)-beta-D-glucosyl-(1&lt;-&gt;1')-N-acyl-sphing-4-enine + GDP-beta-L-fucose = N-acetyl-alpha-neuraminosyl-(2-&gt;3)-beta-D-galactosyl-(1-&gt;3)-alpha-L-fucosyl-(1-&gt;4)-[N-acetyl-alpha-neuraminosyl-(2-&gt;6)-N-acetyl-beta-D-glucosaminyl-(1-&gt;3)]-beta-D-galactosyl-(1-&gt;4)-beta-D-glucosyl-(1&lt;-&gt;1')-N-acyl-sphing-4-enine + GDP + H(+). It catalyses the reaction N-acetyl-alpha-neuraminosyl-(2-&gt;3)-beta-D-galactosyl-(1-&gt;3)-N-acetyl-beta-D-glucosaminyl-(1-&gt;3)-beta-D-galactosyl-(1-&gt;4)-beta-D-glucosyl-(1&lt;-&gt;1')-N-acyl-sphing-4-enine + GDP-beta-L-fucose = N-acetyl-alpha-neuraminosyl-(2-&gt;3)-beta-D-galactosyl-(1-&gt;3)-alpha-L-fucosyl-(1-&gt;4)-[N-acetyl-beta-D-glucosaminyl-(1-&gt;3)]-beta-D-galactosyl-(1-&gt;4)-beta-D-glucosyl-(1&lt;-&gt;1')-N-acyl-sphing-4-enine + GDP + H(+). The catalysed reaction is beta-D-galactosyl-(1-&gt;3)-N-acetyl-D-glucosamine + GDP-beta-L-fucose = beta-D-galactosyl-(1-&gt;3)-[alpha-L-fucosyl-(1-&gt;4)]-N-acetyl-D-glucosamine + GDP + H(+). It carries out the reaction alpha-L-Fuc-(1-&gt;2)-beta-D-Gal-(1-&gt;3)-D-GlcNAc + GDP-beta-L-fucose = alpha-L-Fuc-(1-&gt;2)-beta-D-Gal-(1-&gt;3)-[alpha-L-Fuc-(1-&gt;4)]-D-GlcNAc + GDP + H(+). The enzyme catalyses alpha-L-Fuc-(1-&gt;2)-beta-D-Gal-(1-&gt;4)-D-GlcNAc + GDP-beta-L-fucose = alpha-L-Fuc-(1-&gt;2)-beta-D-Gal-(1-&gt;4)-[alpha-L-Fuc-(1-&gt;3)]-D-GlcNAc + GDP + H(+). It catalyses the reaction beta-D-galactosyl-(1-&gt;4)-N-acetyl-D-glucosamine + GDP-beta-L-fucose = beta-D-galactosyl-(1-&gt;4)-[alpha-L-fucosyl-(1-&gt;3)]-N-acetyl-D-glucosamine + GDP + H(+). The catalysed reaction is lactose + GDP-beta-L-fucose = beta-D-galactosyl-(1-&gt;4)-[alpha-L-fucosyl-(1-&gt;3)]-D-glucose + GDP + H(+). It carries out the reaction an alpha-Neu5Ac-(2-&gt;3)-beta-D-Gal-(1-&gt;3)-D-GlcNAc derivative + GDP-beta-L-fucose = an alpha-Neu5Ac-(2-&gt;3)-beta-D-Gal-(1-&gt;3)-[alpha-L-Fuc-(1-&gt;4)]-beta-D-GlcNAc derivative + GDP + H(+). The protein operates within protein modification; protein glycosylation. Functionally, catalyzes the transfer of L-fucose, from a guanosine diphosphate-beta-L-fucose, to both the subterminal N-acetyl glucosamine (GlcNAc) of type 1 chain (beta-D-Gal-(1-&gt;3)-beta-D-GlcNAc) glycolipids and oligosaccharides via an alpha(1,4) linkage, and the subterminal glucose (Glc) or GlcNAc of type 2 chain (beta-D-Gal-(1-&gt;4)-beta-D-GlcNAc) oligosaccharides via an alpha(1,3) linkage, independently of the presence of terminal alpha-L-fucosyl-(1,2) moieties on the terminal galactose of these acceptors and participates in the blood groups Lewis determination and expression of Lewis a (Le(a)), lewis b (Le(b)), Lewis x/SSEA-1 (Le(x)) and lewis y (Le(y)) antigens. Also catalyzes the transfer of L-fucose to subterminal GlcNAc of sialyl- and disialyl-lactotetraosylceramide to produce sialyl Lewis a (sLe(a)) and disialyl Lewis a via an alpha(1,4) linkage and therefore may regulate cell surface sialyl Lewis a expression and consequently regulates adhesive properties to E-selectin, cell proliferation and migration. Catalyzes the transfer of an L-fucose to 3'-sialyl-N-acetyllactosamine by an alpha(1,3) linkage, which allows the formation of sialyl-Lewis x structure and therefore may regulate the sialyl-Lewis x surface antigen expression and consequently adhesive properties to E-selectin. Prefers type 1 chain over type 2 acceptors. Type 1 tetrasaccharide is a better acceptor than type 1 disaccharide suggesting that a beta anomeric configuration of GlcNAc in the substrate is preferred. Lewis-positive (Le(+)) individuals have an active enzyme while Lewis-negative (Le(-)) individuals have an inactive enzyme. The chain is 3-galactosyl-N-acetylglucosaminide 4-alpha-L-fucosyltransferase FUT3 from Bos taurus (Bovine).